Here is a 303-residue protein sequence, read N- to C-terminus: Foldase protein PrsA (303 aa).

An N-terminal signal peptide occupies residues 1-20; the sequence is MMKKWLLAAASLLMVVTLAG. C21 carries the N-palmitoyl cysteine lipid modification. C21 carries the S-diacylglycerol cysteine lipid modification. One can recognise a PpiC domain in the interval 137–233; sequence EPKVEVQHIL…YGYHVIRMIK (97 aa).

The protein belongs to the PrsA family.

Its subcellular location is the cell membrane. It carries out the reaction [protein]-peptidylproline (omega=180) = [protein]-peptidylproline (omega=0). Plays a major role in protein secretion by helping the post-translocational extracellular folding of several secreted proteins. In Latilactobacillus sakei subsp. sakei (strain 23K) (Lactobacillus sakei subsp. sakei), this protein is Foldase protein PrsA.